Reading from the N-terminus, the 451-residue chain is Chromosomal replication initiator protein DnaA 2 (451 aa).

Positions 1–68 (MQAWEEFLKA…QQKFINGNNK (68 aa)) are domain I, interacts with DnaA modulators. The interval 68–104 (KRIKIHLSVANTPQRAKKTKTANKEKDFKAPFELTFD) is domain II. A domain III, AAA+ region region spans residues 105–326 (ELDPLCLFPY…KGLEALVLRL (222 aa)). ATP is bound by residues Gly156, Gly158, Lys159, and Thr160. A domain IV, binds dsDNA region spans residues 327-451 (HLDAKHSITA…CHIILKKLQG (125 aa)).

Belongs to the DnaA family. As to quaternary structure, oligomerizes as a right-handed, spiral filament on DNA at oriC.

The protein resides in the cytoplasm. Functionally, plays an essential role in the initiation and regulation of chromosomal replication. ATP-DnaA binds to the origin of replication (oriC) to initiate formation of the DNA replication initiation complex once per cell cycle. Binds the DnaA box (a 9 base pair repeat at the origin) and separates the double-stranded (ds)DNA. Forms a right-handed helical filament on oriC DNA; dsDNA binds to the exterior of the filament while single-stranded (ss)DNA is stabiized in the filament's interior. The ATP-DnaA-oriC complex binds and stabilizes one strand of the AT-rich DNA unwinding element (DUE), permitting loading of DNA polymerase. After initiation quickly degrades to an ADP-DnaA complex that is not apt for DNA replication. Binds acidic phospholipids. The chain is Chromosomal replication initiator protein DnaA 2 from Protochlamydia amoebophila (strain UWE25).